Consider the following 660-residue polypeptide: MKAVVFAYHDMGCLGVQALLDAGYEISAIFTHADNPAEKVFYGSVSRLAALAGIPVYAPDDINHPLWVERIAQLAPDVIFSFYYRNLLNNEILKLAPHGAFNLHGSLLPKYRGRAPLNWVLENGENETGVTLHRMVAKADAGAIIAQQRVAIDPEDAALTLHKKLCQSASQMLEYALPAIKQGQTQETAQNESEATYFGRRKPEDSFLDWNKPATVLHNMVRAVADPWPGAFSYVGTQKFTIWSSRVHPRVNAAQPGSVISVAPFLIACGDGALEVITGQSVDGITMQGSQLAQTLGLVEGSRLNSQPVCTVQRRTRVLILGVNGFIGNHLTERLLREDHYEVYGLDIGSDAISRFLTHPNFHFVEGDISIHSEWIEYHIKKCDVVLPLVAIATPIEYTRNPLRVFELDFEENLRIIRYCVQYHKRIIFPSTSEVYGMCTDKFFDEDHSNLIVGPINKPRWIYSVSKQLLDRVIWAYGEKEGLQFTLFRPFNWMGPRLDNLNAARIGSSRAITQLILNLVEGSPIKLIDGGKQKRCFTDIRDGIEALYRIIENTGNRCDGEIINIGNPDNEASIEELGKMLLASFDKHPLRQHFPPFAGFRVVESSSYYGKGYQDVEHRKPSIRNARRCLDWEPTIDMQETIDETLDFFLRTVDIVEKSS.

Residues 1 to 304 (MKAVVFAYHD…TLGLVEGSRL (304 aa)) form a formyltransferase ArnAFT region. The active-site Proton donor; for formyltransferase activity is the His104. (6R)-10-formyltetrahydrofolate contacts are provided by residues Arg114 and 136–140 (VAKAD). A dehydrogenase ArnADH region spans residues 314–660 (RRTRVLILGV…RTVDIVEKSS (347 aa)). Residues Asp347 and 368 to 369 (DI) contribute to the NAD(+) site. Residues Ala393, Tyr398, and 432–433 (TS) each bind UDP-alpha-D-glucuronate. Catalysis depends on Glu434, which acts as the Proton acceptor; for decarboxylase activity. UDP-alpha-D-glucuronate-binding positions include Arg460, Asn492, 526–535 (KLIDGGKQKR), and Tyr613. Residue Arg619 is the Proton donor; for decarboxylase activity of the active site.

It in the N-terminal section; belongs to the Fmt family. UDP-L-Ara4N formyltransferase subfamily. The protein in the C-terminal section; belongs to the NAD(P)-dependent epimerase/dehydratase family. UDP-glucuronic acid decarboxylase subfamily. As to quaternary structure, homohexamer, formed by a dimer of trimers.

It catalyses the reaction UDP-alpha-D-glucuronate + NAD(+) = UDP-beta-L-threo-pentopyranos-4-ulose + CO2 + NADH. The enzyme catalyses UDP-4-amino-4-deoxy-beta-L-arabinose + (6R)-10-formyltetrahydrofolate = UDP-4-deoxy-4-formamido-beta-L-arabinose + (6S)-5,6,7,8-tetrahydrofolate + H(+). Its pathway is nucleotide-sugar biosynthesis; UDP-4-deoxy-4-formamido-beta-L-arabinose biosynthesis; UDP-4-deoxy-4-formamido-beta-L-arabinose from UDP-alpha-D-glucuronate: step 1/3. The protein operates within nucleotide-sugar biosynthesis; UDP-4-deoxy-4-formamido-beta-L-arabinose biosynthesis; UDP-4-deoxy-4-formamido-beta-L-arabinose from UDP-alpha-D-glucuronate: step 3/3. It functions in the pathway bacterial outer membrane biogenesis; lipopolysaccharide biosynthesis. Functionally, bifunctional enzyme that catalyzes the oxidative decarboxylation of UDP-glucuronic acid (UDP-GlcUA) to UDP-4-keto-arabinose (UDP-Ara4O) and the addition of a formyl group to UDP-4-amino-4-deoxy-L-arabinose (UDP-L-Ara4N) to form UDP-L-4-formamido-arabinose (UDP-L-Ara4FN). The modified arabinose is attached to lipid A and is required for resistance to polymyxin and cationic antimicrobial peptides. The protein is Bifunctional polymyxin resistance protein ArnA of Escherichia fergusonii (strain ATCC 35469 / DSM 13698 / CCUG 18766 / IAM 14443 / JCM 21226 / LMG 7866 / NBRC 102419 / NCTC 12128 / CDC 0568-73).